We begin with the raw amino-acid sequence, 858 residues long: MFTLAEVASLNDIQPTYRILKPWWDVFMDYLAVVMLMVAIFAGTMQLTKDQVVCLPVLPSPVNSKAHTPPGNAEVTTNIPKMEAATNQDQDGRTTNDISFGTSAVTPDIPLRATYPRTDFALPNQEAKKEKKDPTGRKTNLDFQQYVFINQMCYHLALPWYSKYFPYLALIHTIILMVSSNFWFKYPKTCSKVEHFVSILGKCFESPWTTKALSETACEDSEENKQRITGAQTLPKHVSTSSDEGSPSASTPMINKTGFKFSAEKPVIEVPSMTILDKKDGEQAKALFEKVRKFRAHVEDSDLIYKLYVVQTVIKTAKFIFILCYTANFVNAISFEHVCKPKVEHLIGYEVFECTHNMAYMLKKLLISYISIICVYGFICLYTLFWLFRIPLKEYSFEKVREESSFSDIPDVKNDFAFLLHMVDQYDQLYSKRFGVFLSEVSENKLREISLNHEWTFEKLRQHISRNAQDKQELHLFMLSGVPDAVFDLTDLDVLKLELIPEAKIPAKISQMTNLQELHLCHCPAKVEQTAFSFLRDHLRCLHVKFTDVAEIPAWVYLLKNLRELYLIGNLNSENNKMIGLESLRELRHLKILHVKSNLTKVPSNITDVAPHLTKLVIHNDGTKLLVLNSLKKMMNVAELELQNCELERIPHAIFSLSNLQELDLKSNNIRTIEEIISFQHLKRLTCLKLWHNKIVTIPPSITHVKNLESLYFSNNKLESLPVAVFSLQKLRCLDVSYNNISMIPIEIGLLQNLQHLHITGNKVDILPKQLFKCIKLRTLNLGQNCITSLPEKVGQLSQLTQLELKGNCLDRLPAQLGQCRMLKKSGLVVEDHLFDTLPLEVKEALNQDINIPFANGI.

The Cytoplasmic segment spans residues 1–22 (MFTLAEVASLNDIQPTYRILKP). A helical membrane pass occupies residues 23–48 (WWDVFMDYLAVVMLMVAIFAGTMQLT). The Extracellular segment spans residues 49 to 163 (KDQVVCLPVL…YHLALPWYSK (115 aa)). An intrachain disulfide couples Cys54 to Cys354. The helical transmembrane segment at 164–182 (YFPYLALIHTIILMVSSNF) threads the bilayer. The Cytoplasmic portion of the chain corresponds to 183–308 (WFKYPKTCSK…EDSDLIYKLY (126 aa)). A disordered region spans residues 221–251 (SEENKQRITGAQTLPKHVSTSSDEGSPSAST). Over residues 227 to 251 (RITGAQTLPKHVSTSSDEGSPSAST) the composition is skewed to polar residues. Phosphoserine occurs at positions 241, 242, and 246. Residues 309–328 (VVQTVIKTAKFIFILCYTAN) traverse the membrane as a helical segment. Topologically, residues 329–360 (FVNAISFEHVCKPKVEHLIGYEVFECTHNMAY) are extracellular. Residues 361-386 (MLKKLLISYISIICVYGFICLYTLFW) traverse the membrane as a helical segment. Residues 387 to 858 (LFRIPLKEYS…DINIPFANGI (472 aa)) are Cytoplasmic-facing. LRR repeat units lie at residues 514–534 (NLQE…AFSF), 538–559 (HLRC…VYLL), 561–582 (NLRE…IGLE), 589–609 (HLKI…ITDV), 612–632 (HLTK…NSLK), 636–657 (NVAE…IFSL), 659–680 (NLQE…ISFQ), 684–705 (RLTC…ITHV), 707–728 (NLES…VFSL), 730–751 (KLRC…IGLL), 753–774 (NLQH…LFKC), 776–797 (KLRT…VGQL), and 799–820 (QLTQ…LGQC).

Belongs to the LRRC8 family. Heterohexamer; oligomerizes with other LRRC8 proteins (LRRC8A, LRRC8B, LRRC8C and/or LRRC8E) to form a heterohexamer. In vivo, the subunit composition may depend primarily on expression levels, and heterooligomeric channels containing various proportions of the different LRRC8 proteins may coexist.

It localises to the cell membrane. It is found in the endoplasmic reticulum membrane. The catalysed reaction is chloride(in) = chloride(out). It catalyses the reaction iodide(out) = iodide(in). The enzyme catalyses taurine(out) = taurine(in). In terms of biological role, non-essential component of the volume-regulated anion channel (VRAC, also named VSOAC channel), an anion channel required to maintain a constant cell volume in response to extracellular or intracellular osmotic changes. The VRAC channel conducts iodide better than chloride and can also conduct organic osmolytes like taurine. Plays a redundant role in the efflux of amino acids, such as aspartate, in response to osmotic stress. LRRC8A and LRRC8D are required for the uptake of the drug cisplatin. Channel activity requires LRRC8A plus at least one other family member (LRRC8B, LRRC8C, LRRC8D or LRRC8E); channel characteristics depend on the precise subunit composition. Also acts as a regulator of glucose-sensing in pancreatic beta cells: VRAC currents, generated in response to hypotonicity- or glucose-induced beta cell swelling, depolarize cells, thereby causing electrical excitation, leading to increase glucose sensitivity and insulin secretion. VRAC channels containing LRRC8D inhibit transport of immunoreactive cyclic dinucleotide GMP-AMP (2'-3'-cGAMP), an immune messenger produced in response to DNA virus in the cytosol. Mediates the import of the antibiotic blasticidin-S into the cell. The protein is Volume-regulated anion channel subunit LRRC8D of Homo sapiens (Human).